Reading from the N-terminus, the 403-residue chain is Ribosomal RNA large subunit methyltransferase I (403 aa).

A PUA domain is found at 9 to 88 (YPRLVLSKGR…ESIDIAFFTR (80 aa)).

It belongs to the methyltransferase superfamily. RlmI family.

It localises to the cytoplasm. It catalyses the reaction cytidine(1962) in 23S rRNA + S-adenosyl-L-methionine = 5-methylcytidine(1962) in 23S rRNA + S-adenosyl-L-homocysteine + H(+). Specifically methylates the cytosine at position 1962 (m5C1962) of 23S rRNA. The sequence is that of Ribosomal RNA large subunit methyltransferase I from Salmonella choleraesuis (strain SC-B67).